A 546-amino-acid chain; its full sequence is MAIITLPYRYLERLAGTDRQTIIDRVPMIGADIERIEDDHVDVEFFPNRPDLYSPEGVARAMRGFLGIEEGLPAYTVRPSGIAFSVDPGLADIRPFLGSAVIRNVNLDEEAIESLMALQEALHWAVGRGRGKVAIGVHDLDTVTPPFRYIASPRNRSFVPLDFEREMTMEEMLADHPKGRDYAHLVENFDTFPLIVDAENRVLSFPPIINGELTRVTAATKNILLDCTGTDRRAVMTAVNIICTALIEAGATVETVTVEGEEMPTLAPAERVVSVAECSRLLGLSLTPQEMAGLLRRMRFDAEPDGDSRVRILVPCYRSDILHDWDIFEDVAIAYGIENFDAALPATSTVAQEHPIPAVAGAVRSVMTGLGYLEAIPFTLTNERVLYANMQREPAPGTLRLLHPISEEQTVVRTDLLPLLMEMLLANKHRELPQRLFAVGDVVEDCVTYLKVAAVSIHPAADFSEAYAAADVLCRELSLSYTVVESADPAFLDGRRGDIVVDGKIVGVFGEIHPAVLGAFDLEHPVAALALDLTAVPGYPALPDTP.

Residues 266-342 form the B5 domain; that stretch reads LAPAERVVSV…IAYGIENFDA (77 aa). Asp320, Asp326, Glu329, and Asp330 together coordinate Mg(2+).

Belongs to the phenylalanyl-tRNA synthetase beta subunit family. Type 2 subfamily. In terms of assembly, tetramer of two alpha and two beta subunits. Requires Mg(2+) as cofactor.

It is found in the cytoplasm. It catalyses the reaction tRNA(Phe) + L-phenylalanine + ATP = L-phenylalanyl-tRNA(Phe) + AMP + diphosphate + H(+). This is Phenylalanine--tRNA ligase beta subunit from Methanoculleus marisnigri (strain ATCC 35101 / DSM 1498 / JR1).